The sequence spans 435 residues: Serine--tRNA ligase (435 aa).

241–243 provides a ligand contact to L-serine; sequence TAE. 272–274 contacts ATP; sequence RSE. Glu295 lines the L-serine pocket. Residue 359–362 coordinates ATP; sequence EISS. Ser395 contributes to the L-serine binding site.

This sequence belongs to the class-II aminoacyl-tRNA synthetase family. Type-1 seryl-tRNA synthetase subfamily. Homodimer. The tRNA molecule binds across the dimer.

It localises to the cytoplasm. It carries out the reaction tRNA(Ser) + L-serine + ATP = L-seryl-tRNA(Ser) + AMP + diphosphate + H(+). The enzyme catalyses tRNA(Sec) + L-serine + ATP = L-seryl-tRNA(Sec) + AMP + diphosphate + H(+). The protein operates within aminoacyl-tRNA biosynthesis; selenocysteinyl-tRNA(Sec) biosynthesis; L-seryl-tRNA(Sec) from L-serine and tRNA(Sec): step 1/1. Functionally, catalyzes the attachment of serine to tRNA(Ser). Is also able to aminoacylate tRNA(Sec) with serine, to form the misacylated tRNA L-seryl-tRNA(Sec), which will be further converted into selenocysteinyl-tRNA(Sec). This is Serine--tRNA ligase from Actinobacillus pleuropneumoniae serotype 5b (strain L20).